We begin with the raw amino-acid sequence, 745 residues long: Copper-transporting ATPase (745 aa).

Positions 1-67 (MKESFYIEGM…LIEKLGYSPK (67 aa)) constitute an HMA domain. At 1–83 (MKESFYIEGM…KKEFFSPNVK (83 aa)) the chain is on the cytoplasmic side. Cu cation is bound by residues C12 and C15. Residues 84 to 104 (LALAVIFTLFVVYLSMGAMLS) form a helical membrane-spanning segment. At 105–124 (PSLLPESLLAIDNHSNFLNA) the chain is on the extracellular side. A helical membrane pass occupies residues 125–144 (CLQLIGALIVMHLGRDFYIQ). The Cytoplasmic segment spans residues 145 to 151 (GFKALWH). Residues 152–172 (RQPNMSSLIAIGTSAALISSL) traverse the membrane as a helical segment. Residues 173–194 (WQLYLVYTNHYTDQWSYGHYYF) lie on the Extracellular side of the membrane. A helical membrane pass occupies residues 195–215 (ESVCVILMFVMVGKRIENVSK). Topologically, residues 216–343 (DKALDAMQAL…KAEISRLADK (128 aa)) are cytoplasmic. A helical transmembrane segment spans residues 344-366 (VSSVFVPSVIAISILAFVVWLII). Topologically, residues 367–379 (APKPDFWWNFGIA) are extracellular. The helical transmembrane segment at 380 to 397 (LEVFVSVLVISCPCALGL) threads the bilayer. Topologically, residues 398 to 685 (ATPMSILVAN…KLSQATIKNI (288 aa)) are cytoplasmic. D435 acts as the 4-aspartylphosphate intermediate in catalysis. Mg(2+)-binding residues include D631 and D635. The chain crosses the membrane as a helical span at residues 686–705 (KENLFWAFCYNSVFIPLACG). Residues 706–716 (VLYKANLMLSP) lie on the Extracellular side of the membrane. The helical transmembrane segment at 717–735 (AIAGLAMSLSSVSVVLNSQ) threads the bilayer. The Cytoplasmic segment spans residues 736–745 (RLRNFKIKDH).

It belongs to the cation transport ATPase (P-type) (TC 3.A.3) family. Type IB subfamily.

It localises to the cell membrane. The enzyme catalyses Cu(2+)(in) + ATP + H2O = Cu(2+)(out) + ADP + phosphate + H(+). In terms of biological role, probably involved in copper export. The chain is Copper-transporting ATPase (copA) from Helicobacter pylori (strain ATCC 700392 / 26695) (Campylobacter pylori).